The primary structure comprises 500 residues: Probable malate:quinone oxidoreductase (500 aa).

This sequence belongs to the MQO family. The cofactor is FAD.

It catalyses the reaction (S)-malate + a quinone = a quinol + oxaloacetate. Its pathway is carbohydrate metabolism; tricarboxylic acid cycle; oxaloacetate from (S)-malate (quinone route): step 1/1. The sequence is that of Probable malate:quinone oxidoreductase from Bordetella avium (strain 197N).